A 289-amino-acid polypeptide reads, in one-letter code: Oxaloacetate decarboxylase (289 aa).

Residue serine 47 participates in substrate binding. Residue aspartate 85 participates in Mg(2+) binding. The substrate site is built by arginine 156 and histidine 232.

This sequence belongs to the isocitrate lyase/PEP mutase superfamily. Oxaloacetate decarboxylase family. In terms of assembly, homotetramer; dimer of dimers. The cofactor is Mg(2+).

The enzyme catalyses oxaloacetate + H(+) = pyruvate + CO2. Its function is as follows. Catalyzes the decarboxylation of oxaloacetate into pyruvate. Seems to play a role in maintaining cellular concentrations of bicarbonate and pyruvate. This chain is Oxaloacetate decarboxylase, found in Rhodopseudomonas palustris (strain BisA53).